Here is a 606-residue protein sequence, read N- to C-terminus: Cryptochrome-1 (606 aa).

The Photolyase/cryptochrome alpha/beta domain maps to 3–132 (VNAVHWFRKG…EVIVRISHTL (130 aa)). Residue Lys11 forms a Glycyl lysine isopeptide (Lys-Gly) (interchain with G-Cter in ubiquitin) linkage. The LIR 1 signature appears at 50-54 (NRWRF). A Phosphoserine; by AMPK modification is found at Ser71. Positions 82-87 (DVFPRL) match the LIR 2 motif. Lys107 participates in a covalent cross-link: Glycyl lysine isopeptide (Lys-Gly) (interchain with G-Cter in ubiquitin). Residues 151–156 (KRFQTL) carry the LIR 3 motif. Residue Lys159 forms a Glycyl lysine isopeptide (Lys-Gly) (interchain with G-Cter in ubiquitin) linkage. The residue at position 247 (Ser247) is a Phosphoserine; by MAPK. An FAD-binding site is contributed by Ser252. 2 consecutive short sequence motifs (LIR) follow at residues 255–260 (LRFGCL) and 271–276 (DLYKKV). Ser280 carries the phosphoserine; by AMPK modification. Positions 285–290 (SLYGQL) match the LIR 6 motif. Gln289 lines the FAD pocket. Residue Lys329 forms a Glycyl lysine isopeptide (Lys-Gly) (interchain with G-Cter in ubiquitin) linkage. Positions 335 to 339 (TGFPW) match the LIR 7 motif. His355 lines the FAD pocket. Residues 371 to 470 (WISWEEGMKV…LIGVNYPKPM (100 aa)) are required for inhibition of CLOCK-BMAL1-mediated transcription. Positions 379–384 (KVFEEL) match the LIR 8 motif. 387-389 (DAD) contributes to the FAD binding site. Short sequence motifs (LIR) lie at residues 395 to 400 (GSWMWL), 411 to 416 (HCYCPV), and 430 to 435 (RRYLPV). The interval 471–493 (VNHAEASRLNIERMKQIYQQLSR) is interaction with TIMELESS. A Glycyl lysine isopeptide (Lys-Gly) (interchain with G-Cter in ubiquitin) cross-link involves residue Lys485. 2 consecutive short sequence motifs (LIR) follow at residues 486 to 491 (QIYQQL) and 492 to 497 (SRYRGL). The tract at residues 559–606 (YAHGDSQQTHSLKQGRSSAGTGLSSGKRPSQEEDAQSVGPKVQRQSSN) is disordered. Polar residues predominate over residues 563–586 (DSQQTHSLKQGRSSAGTGLSSGKR). A Glycyl lysine isopeptide (Lys-Gly) (interchain with G-Cter in ubiquitin) cross-link involves residue Lys585. A Phosphoserine modification is found at Ser588.

Belongs to the DNA photolyase class-1 family. As to quaternary structure, component of the circadian core oscillator, which includes the CRY proteins, CLOCK or NPAS2, BMAL1 or BMAL2, CSNK1D and/or CSNK1E, TIMELESS, and the PER proteins. Interacts directly with TIMELESS. Interacts directly with PER1 and PER2; interaction with PER2 inhibits its ubiquitination and vice versa. Interacts with PER3. Interacts with FBXL21. Interacts with FBXL3. Interacts with PPP5C (via TPR repeats). Interacts with CLOCK-BMAL1 independently of PER2 and DNA. Interacts with HDAC1, HDAC2 and SIN3B. Interacts with nuclear receptors AR, NR1D1, NR3C1/GR, RORA and RORC; the interaction with at least NR3C1/GR is ligand dependent. Interacts with PRKDC. Interacts with the G protein subunit alpha GNAS; the interaction may block GPCR-mediated regulation of cAMP concentrations. Interacts with PRMT5. Interacts with EZH2. Interacts with MYBBP1A, DOCK7, HNRNPU, RPL7A, RPL8 and RPS3. Interacts with MAP1LC3B. Interacts with CLOCK. Interacts with BMAL1. Interacts weakly with HDAC3; this interaction is enhanced in the presence of FBXL3. Interacts with TRIM28, KCTD5 and DDB1. Interacts with DTL. Interacts with DDB1-CUL4A complex. Interacts with FOXO1. Interacts with PSMD2 in a KDM8-dependent manner. Interacts with KDM8 in a FBXL3-dependent manner. Interacts with PPARA. Interacts with PPARG in a ligand-dependent manner. Interacts with PPARD (via domain NR LBD) in a ligand-dependent manner. Interacts with NR1I2 (via domain NR LBD) in a ligand-dependent manner. Interacts with NR1I3, VDR and HNF4A. Requires FAD as cofactor. It depends on (6R)-5,10-methylene-5,6,7,8-tetrahydrofolate as a cofactor. Phosphorylation on Ser-247 by MAPK is important for the inhibition of CLOCK-BMAL1-mediated transcriptional activity. Phosphorylation by CSNK1E requires interaction with PER1 or PER2. Phosphorylation at Ser-71 and Ser-280 by AMPK decreases protein stability. Phosphorylation at Ser-588 exhibits a robust circadian rhythm with a peak at CT8, increases protein stability, prevents SCF(FBXL3)-mediated degradation and is antagonized by interaction with PRKDC. Post-translationally, ubiquitinated by the SCF(FBXL3) and SCF(FBXL21) complexes, regulating the balance between degradation and stabilization. The SCF(FBXL3) complex is mainly nuclear and mediates ubiquitination and subsequent degradation of CRY1. In contrast, cytoplasmic SCF(FBXL21) complex-mediated ubiquitination leads to stabilize CRY1 and counteract the activity of the SCF(FBXL3) complex. The SCF(FBXL3) and SCF(FBXL21) complexes probably mediate ubiquitination at different Lys residues. Ubiquitination at Lys-11 and Lys-107 are specifically ubiquitinated by the SCF(FBXL21) complex but not by the SCF(FBXL3) complex. Ubiquitination may be inhibited by PER2. Deubiquitinated by USP7. In terms of processing, undergoes autophagy-mediated degradation in the liver in a time-dependent manner. Autophagic degradation of CRY1 (an inhibitor of gluconeogenesis) occurs during periods of reduced feeding allowing induction of gluconeogenesis and maintenance of blood glucose levels. In terms of tissue distribution, expressed in cones, amacrine cells, and retinal ganglion cells of the retina (at protein level). Expressed in all tissues examined including heart, brain, spleen, lung, liver, skeletal muscle, kidney and testis. Higher levels in brain, liver and testis. In the retina, highly expressed in the ganglion cell layer (GCL) and in the inner nuclear layer (INL). Evenly distributed in central and peripheral retina. In the brain, highly expressed in the suprachiasmatic nucleus (SCN). High levels in cerebral cortical layers particularly in the pyramidial cell layer of the hippocampus, the granular cell layer of the dentate gyrus (DG) and the pyramidal cell layer of the piriform cortex (PFC).

The protein resides in the cytoplasm. It localises to the nucleus. With respect to regulation, KL001 (N-[3-(9H-carbazol-9-yl)-2-hydroxypropyl]-N-(2-furanylmethyl)-methanesulfonamide) binds to CRY1 and stabilizes it by inhibiting FBXL3- and ubiquitin-dependent degradation of CRY1 resulting in lengthening of the circadian periods. KL001-mediated CRY1 stabilization can inhibit glucagon-induced gluconeogenesis in primary hepatocytes. Transcriptional repressor which forms a core component of the circadian clock. The circadian clock, an internal time-keeping system, regulates various physiological processes through the generation of approximately 24 hour circadian rhythms in gene expression, which are translated into rhythms in metabolism and behavior. It is derived from the Latin roots 'circa' (about) and 'diem' (day) and acts as an important regulator of a wide array of physiological functions including metabolism, sleep, body temperature, blood pressure, endocrine, immune, cardiovascular, and renal function. Consists of two major components: the central clock, residing in the suprachiasmatic nucleus (SCN) of the brain, and the peripheral clocks that are present in nearly every tissue and organ system. Both the central and peripheral clocks can be reset by environmental cues, also known as Zeitgebers (German for 'timegivers'). The predominant Zeitgeber for the central clock is light, which is sensed by retina and signals directly to the SCN. The central clock entrains the peripheral clocks through neuronal and hormonal signals, body temperature and feeding-related cues, aligning all clocks with the external light/dark cycle. Circadian rhythms allow an organism to achieve temporal homeostasis with its environment at the molecular level by regulating gene expression to create a peak of protein expression once every 24 hours to control when a particular physiological process is most active with respect to the solar day. Transcription and translation of core clock components (CLOCK, NPAS2, BMAL1, BMAL2, PER1, PER2, PER3, CRY1 and CRY2) plays a critical role in rhythm generation, whereas delays imposed by post-translational modifications (PTMs) are important for determining the period (tau) of the rhythms (tau refers to the period of a rhythm and is the length, in time, of one complete cycle). A diurnal rhythm is synchronized with the day/night cycle, while the ultradian and infradian rhythms have a period shorter and longer than 24 hours, respectively. Disruptions in the circadian rhythms contribute to the pathology of cardiovascular diseases, cancer, metabolic syndromes and aging. A transcription/translation feedback loop (TTFL) forms the core of the molecular circadian clock mechanism. Transcription factors, CLOCK or NPAS2 and BMAL1 or BMAL2, form the positive limb of the feedback loop, act in the form of a heterodimer and activate the transcription of core clock genes and clock-controlled genes (involved in key metabolic processes), harboring E-box elements (5'-CACGTG-3') within their promoters. The core clock genes: PER1/2/3 and CRY1/2 which are transcriptional repressors form the negative limb of the feedback loop and interact with the CLOCK|NPAS2-BMAL1|BMAL2 heterodimer inhibiting its activity and thereby negatively regulating their own expression. This heterodimer also activates nuclear receptors NR1D1/2 and RORA/B/G, which form a second feedback loop and which activate and repress BMAL1 transcription, respectively. CRY1 and CRY2 have redundant functions but also differential and selective contributions at least in defining the pace of the SCN circadian clock and its circadian transcriptional outputs. More potent transcriptional repressor in cerebellum and liver than CRY2, though more effective in lengthening the period of the SCN oscillator. On its side, CRY2 seems to play a critical role in tuning SCN circadian period by opposing the action of CRY1. With CRY2, is dispensable for circadian rhythm generation but necessary for the development of intercellular networks for rhythm synchrony. Capable of translocating circadian clock core proteins such as PER proteins to the nucleus. Interacts with CLOCK-BMAL1 independently of PER proteins and is found at CLOCK-BMAL1-bound sites, suggesting that CRY may act as a molecular gatekeeper to maintain CLOCK-BMAL1 in a poised and repressed state until the proper time for transcriptional activation. Represses the CLOCK-BMAL1 induced transcription of BHLHE40/DEC1, ATF4, MTA1, KLF10 and NAMPT. May repress circadian target genes expression in collaboration with HDAC1 and HDAC2 through histone deacetylation. Mediates the clock-control activation of ATR and modulates ATR-mediated DNA damage checkpoint. In liver, mediates circadian regulation of cAMP signaling and gluconeogenesis by binding to membrane-coupled G proteins and blocking glucagon-mediated increases in intracellular cAMP concentrations and CREB1 phosphorylation. Inhibits hepatic gluconeogenesis by decreasing nuclear FOXO1 levels that down-regulates gluconeogenic gene expression. Besides its role in the maintenance of the circadian clock, is also involved in the regulation of other processes. Represses glucocorticoid receptor NR3C1/GR-induced transcriptional activity by binding to glucocorticoid response elements (GREs). Plays a key role in glucose and lipid metabolism modulation, in part, through the transcriptional regulation of genes involved in these pathways, such as LEP or ACSL4. Represses PPARD and its target genes in the skeletal muscle and limits exercise capacity. Plays an essential role in the generation of circadian rhythms in the retina. Represses the transcriptional activity of NR1I2. The sequence is that of Cryptochrome-1 (Cry1) from Mus musculus (Mouse).